We begin with the raw amino-acid sequence, 277 residues long: Large ribosomal subunit protein uL2 (277 aa).

Disordered stretches follow at residues 24 to 55 and 221 to 277; these read ITTSTPEKSLLRPLKKKAGRNNQGKLTVRHHG and RGSV…RKKK.

This sequence belongs to the universal ribosomal protein uL2 family. In terms of assembly, part of the 50S ribosomal subunit. Forms a bridge to the 30S subunit in the 70S ribosome.

Functionally, one of the primary rRNA binding proteins. Required for association of the 30S and 50S subunits to form the 70S ribosome, for tRNA binding and peptide bond formation. It has been suggested to have peptidyltransferase activity; this is somewhat controversial. Makes several contacts with the 16S rRNA in the 70S ribosome. The chain is Large ribosomal subunit protein uL2 from Listeria welshimeri serovar 6b (strain ATCC 35897 / DSM 20650 / CCUG 15529 / CIP 8149 / NCTC 11857 / SLCC 5334 / V8).